The sequence spans 227 residues: Peroxiredoxin-like 2A (227 aa).

The segment at 13 to 111 (LWSISIGAFG…DQLGVPLYAV (99 aa)) is thioredoxin fold. Active-site redox-active residues include Cys-84 and Cys-87.

It belongs to the peroxiredoxin-like PRXL2 family. PRXL2A subfamily.

It is found in the cytoplasm. Involved in redox regulation of the cell. Acts as an antioxidant. In Xenopus tropicalis (Western clawed frog), this protein is Peroxiredoxin-like 2A (prxl2a).